The sequence spans 123 residues: Large ribosomal subunit protein uL14 (123 aa).

The protein belongs to the universal ribosomal protein uL14 family. As to quaternary structure, part of the 50S ribosomal subunit. Forms a cluster with proteins L3 and L19. In the 70S ribosome, L14 and L19 interact and together make contacts with the 16S rRNA in bridges B5 and B8.

Its function is as follows. Binds to 23S rRNA. Forms part of two intersubunit bridges in the 70S ribosome. In Sodalis glossinidius (strain morsitans), this protein is Large ribosomal subunit protein uL14.